A 338-amino-acid chain; its full sequence is L-serine dehydratase (338 aa).

Lysine 39 carries the N6-(pyridoxal phosphate)lysine modification.

Belongs to the serine/threonine dehydratase family. The cofactor is pyridoxal 5'-phosphate.

The protein resides in the cytoplasm. The catalysed reaction is L-serine = pyruvate + NH4(+). It participates in carbohydrate biosynthesis; gluconeogenesis. The polypeptide is L-serine dehydratase (SDL1) (Saccharomyces cerevisiae (Baker's yeast)).